The following is a 328-amino-acid chain: Ferredoxin--NADP reductase (328 aa).

FAD-binding residues include Glu34, Gln42, Tyr47, Val87, Phe120, Asp283, and Thr323.

Belongs to the ferredoxin--NADP reductase type 2 family. In terms of assembly, homodimer. Requires FAD as cofactor.

The catalysed reaction is 2 reduced [2Fe-2S]-[ferredoxin] + NADP(+) + H(+) = 2 oxidized [2Fe-2S]-[ferredoxin] + NADPH. This Pediococcus pentosaceus (strain ATCC 25745 / CCUG 21536 / LMG 10740 / 183-1w) protein is Ferredoxin--NADP reductase.